Reading from the N-terminus, the 159-residue chain is Phosphopantetheine adenylyltransferase (159 aa).

Substrate is bound at residue S9. Residues 9 to 10 (SF) and H17 each bind ATP. Positions 41, 75, and 89 each coordinate substrate. Residues 90–92 (GLR), E100, and 124–130 (LEHISSS) contribute to the ATP site.

It belongs to the bacterial CoaD family. In terms of assembly, homohexamer. It depends on Mg(2+) as a cofactor.

It is found in the cytoplasm. It carries out the reaction (R)-4'-phosphopantetheine + ATP + H(+) = 3'-dephospho-CoA + diphosphate. Its pathway is cofactor biosynthesis; coenzyme A biosynthesis; CoA from (R)-pantothenate: step 4/5. Functionally, reversibly transfers an adenylyl group from ATP to 4'-phosphopantetheine, yielding dephospho-CoA (dPCoA) and pyrophosphate. The polypeptide is Phosphopantetheine adenylyltransferase (Bifidobacterium animalis subsp. lactis (strain AD011)).